The primary structure comprises 178 residues: CDP-archaeol synthase (178 aa).

Transmembrane regions (helical) follow at residues L3–V23, F56–Y76, L87–L107, A123–L145, and I150–Y169.

This sequence belongs to the CDP-archaeol synthase family. Mg(2+) is required as a cofactor.

The protein localises to the cell membrane. It catalyses the reaction 2,3-bis-O-(geranylgeranyl)-sn-glycerol 1-phosphate + CTP + H(+) = CDP-2,3-bis-O-(geranylgeranyl)-sn-glycerol + diphosphate. It functions in the pathway membrane lipid metabolism; glycerophospholipid metabolism. Functionally, catalyzes the formation of CDP-2,3-bis-(O-geranylgeranyl)-sn-glycerol (CDP-archaeol) from 2,3-bis-(O-geranylgeranyl)-sn-glycerol 1-phosphate (DGGGP) and CTP. This reaction is the third ether-bond-formation step in the biosynthesis of archaeal membrane lipids. This chain is CDP-archaeol synthase, found in Methanococcus maripaludis (strain C6 / ATCC BAA-1332).